The sequence spans 732 residues: Prolyl tripeptidyl peptidase (732 aa).

An N-terminal signal peptide occupies residues 1–24 (MKKTIFQQLFLSVCALTVALPCSA). Catalysis depends on charge relay system residues Ser603, Asp678, and His710.

Belongs to the peptidase S9B family.

The enzyme catalyses Hydrolysis of Xaa-Xaa-Pro-|-Yaa- releasing the N-terminal tripeptide of a peptide with Pro as the third residue (position P1) and where Yaa is not proline.. In terms of biological role, serine proteinase. Releases tripeptides from the free amino terminus of proteins. Has a requirement for Pro in the P1 position, but is inactivated by Pro in the P1' position. The protein is Prolyl tripeptidyl peptidase of Porphyromonas gingivalis (strain ATCC 33277 / DSM 20709 / CIP 103683 / JCM 12257 / NCTC 11834 / 2561).